The chain runs to 597 residues: Arginine--tRNA ligase (597 aa).

The 'HIGH' region motif lies at 125–135 (PNTNKPLHLGH).

It belongs to the class-I aminoacyl-tRNA synthetase family. Monomer.

It is found in the cytoplasm. It carries out the reaction tRNA(Arg) + L-arginine + ATP = L-arginyl-tRNA(Arg) + AMP + diphosphate. The protein is Arginine--tRNA ligase of Porphyromonas gingivalis (strain ATCC 33277 / DSM 20709 / CIP 103683 / JCM 12257 / NCTC 11834 / 2561).